A 170-amino-acid polypeptide reads, in one-letter code: Anaphase-promoting complex subunit SWM1 (170 aa).

Composition is skewed to basic and acidic residues over residues 48–67 and 132–141; these read NTRT…RNSN and GANEPRKETI. Disordered stretches follow at residues 48–81 and 122–141; these read NTRT…MTSE and LNGG…KETI.

The protein belongs to the APC13 family. As to quaternary structure, the APC/C is composed of at least 13 subunits that stay tightly associated throughout the cell cycle: APC1, APC2, APC4, APC5, APC9, APC11, CDC16, CDC23, CDC26, CDC27, DOC1, MND2 and SWM1. SWM1 interacts directly with CDC23 and APC5, and is required to tether APC9, CDC16, CDC26 and CDC27 to the complex.

The protein operates within protein modification; protein ubiquitination. In terms of biological role, component of the anaphase promoting complex/cyclosome (APC/C), a cell cycle-regulated E3 ubiquitin-protein ligase complex that controls progression through mitosis and the G1 phase of the cell cycle. The APC/C is thought to confer substrate specificity and, in the presence of ubiquitin-conjugating E2 enzymes, it catalyzes the formation of protein-ubiquitin conjugates that are subsequently degraded by the 26S proteasome. In early mitosis, the APC/C is activated by CDC20 and targets securin PDS1, the B-type cyclin CLB5, and other anaphase inhibitory proteins for proteolysis, thereby triggering the separation of sister chromatids at the metaphase-to-anaphase transition. In late mitosis and in G1, degradation of CLB5 allows activation of the APC/C by CDH1, which is needed to destroy CDC20 and the B-type cyclin CLB2 to allow exit from mitosis and creating the low CDK state necessary for cytokinesis and for reforming prereplicative complexes in G1 prior to another round of replication. SWM1 is required for APC/C activity in meiosis. The chain is Anaphase-promoting complex subunit SWM1 (SWM1) from Saccharomyces cerevisiae (strain ATCC 204508 / S288c) (Baker's yeast).